The primary structure comprises 267 residues: 4-hydroxy-tetrahydrodipicolinate reductase (267 aa).

NAD(+) contacts are provided by residues 8 to 13 and D34; that span reads GAAGRM. R35 contributes to the NADP(+) binding site. NAD(+) is bound by residues 98-100 and 122-125; these read GTT and AANF. H155 serves as the catalytic Proton donor/acceptor. H156 is a binding site for (S)-2,3,4,5-tetrahydrodipicolinate. The Proton donor role is filled by K159. 165 to 166 contributes to the (S)-2,3,4,5-tetrahydrodipicolinate binding site; sequence GT.

Belongs to the DapB family.

The protein localises to the cytoplasm. It carries out the reaction (S)-2,3,4,5-tetrahydrodipicolinate + NAD(+) + H2O = (2S,4S)-4-hydroxy-2,3,4,5-tetrahydrodipicolinate + NADH + H(+). The enzyme catalyses (S)-2,3,4,5-tetrahydrodipicolinate + NADP(+) + H2O = (2S,4S)-4-hydroxy-2,3,4,5-tetrahydrodipicolinate + NADPH + H(+). Its pathway is amino-acid biosynthesis; L-lysine biosynthesis via DAP pathway; (S)-tetrahydrodipicolinate from L-aspartate: step 4/4. Its function is as follows. Catalyzes the conversion of 4-hydroxy-tetrahydrodipicolinate (HTPA) to tetrahydrodipicolinate. The protein is 4-hydroxy-tetrahydrodipicolinate reductase of Pseudomonas putida (strain GB-1).